Reading from the N-terminus, the 568-residue chain is DNA ligase 2 (568 aa).

E254 lines the ATP pocket. The active-site N6-AMP-lysine intermediate is the K256. Residues R261, R276, E306, F346, R425, and K431 each coordinate ATP.

The protein belongs to the ATP-dependent DNA ligase family. The cofactor is Mg(2+).

The catalysed reaction is ATP + (deoxyribonucleotide)n-3'-hydroxyl + 5'-phospho-(deoxyribonucleotide)m = (deoxyribonucleotide)n+m + AMP + diphosphate.. Functionally, DNA ligase that seals nicks in double-stranded DNA during DNA replication, DNA recombination and DNA repair. In Methanosarcina mazei (strain ATCC BAA-159 / DSM 3647 / Goe1 / Go1 / JCM 11833 / OCM 88) (Methanosarcina frisia), this protein is DNA ligase 2.